The primary structure comprises 377 residues: MTHVLRARRLLTEEGWLDDHQLRIADGVIAAIEPIPVSVTERDAELLCPAYIDTHVHGGAGVDVMDDAPDVLDKLAMHKAREGVGSWLPTTVTAPLSTIHAALKRIAQRCQRGGPGAQVLGSYLEGPYFTPQNKGAHPPELFRELEIAELDQLIAVSQHTLRVVALAPEKEGALQAIRHLKQQNVRVMLGHSAATWQQTRAAFDAGADGLVHCYNGMTGLHHREPGMVGAGLTDKRAWLELIADGHHVHPAAMSLCCCCAKERIVLITDAMQAAGMPDGRYTLCGEEVQMHGGVVRTASGGLAGSTLSVDAAVRNMVELTGVTPAEAIHMASLHPARMLGVDGVLGSLKPGKRASVVALDSGLHVQQIWIQGQLASF.

An a divalent metal cation-binding site is contributed by Glu-125. Position 136–137 (136–137 (AH)) interacts with substrate. Positions 191 and 212 each coordinate a divalent metal cation. Substrate contacts are provided by residues 215–216 (NG), Arg-223, and 244–247 (DGHH). The active-site Proton donor/acceptor is Asp-269. Residue 302 to 304 (LAG) participates in substrate binding.

The protein belongs to the metallo-dependent hydrolases superfamily. NagA family. Requires a divalent metal cation as cofactor.

The catalysed reaction is N-acetyl-D-galactosamine 6-phosphate + H2O = D-galactosamine 6-phosphate + acetate. Catalyzes the deacetylation of N-acetyl-D-galactosamine 6-phosphate to D-galactosamine 6-phosphate. Can probably also catalyze the deacetylation of N-acetyl-D-glucosamine 6-phosphate to D-glucosamine 6-phosphate. The chain is N-acetylgalactosamine-6-phosphate deacetylase (agaA) from Escherichia coli O157:H7.